Consider the following 570-residue polypeptide: piRNA biogenesis protein EXD1 (570 aa).

In terms of domain architecture, 3'-5' exonuclease spans 135 to 307; it reads YTVIDQFQQK…LPPSLLKILA (173 aa). Basic and acidic residues-rich tracts occupy residues 433 to 442 and 453 to 465; these read DEKFLDKESK and PRKE…DSKN. Residues 433–485 are disordered; it reads DEKFLDKESKQTTAKSQIVPPRKEGEAHKDSKNKPGCWESAGPEDPRAQKAHA.

It belongs to the EXD1 family. Homodimer. Component of the PET complex, at least composed of EXD1, PIWIL2, TDRD12 and piRNAs.

It is found in the cytoplasm. Functionally, RNA-binding component of the PET complex, a multiprotein complex required for the processing of piRNAs during spermatogenesis. The piRNA metabolic process mediates the repression of transposable elements during meiosis by forming complexes composed of piRNAs and Piwi proteins and governs the methylation and subsequent repression of transposable elements, preventing their mobilization, which is essential for the germline integrity. The PET complex is required during the secondary piRNAs metabolic process for the PIWIL2 slicing-triggered loading of PIWIL4 piRNAs. In the PET complex, EXD1 probably acts as an RNA adapter. EXD1 is an inactive exonuclease. The sequence is that of piRNA biogenesis protein EXD1 (Exd1) from Mus musculus (Mouse).